The following is a 95-amino-acid chain: DNA-directed RNA polymerase subunit Rpo11 (95 aa).

This sequence belongs to the archaeal Rpo11/eukaryotic RPB11/RPC19 RNA polymerase subunit family. In terms of assembly, part of the RNA polymerase complex.

The protein resides in the cytoplasm. The catalysed reaction is RNA(n) + a ribonucleoside 5'-triphosphate = RNA(n+1) + diphosphate. Its function is as follows. DNA-dependent RNA polymerase (RNAP) catalyzes the transcription of DNA into RNA using the four ribonucleoside triphosphates as substrates. The chain is DNA-directed RNA polymerase subunit Rpo11 from Pyrococcus abyssi (strain GE5 / Orsay).